The following is a 391-amino-acid chain: Outer membrane protein 41 (391 aa).

Positions methionine 1–alanine 20 are cleaved as a signal peptide. Pyrrolidone carboxylic acid is present on glutamine 21. An OmpA-like domain is found at threonine 282 to lysine 391.

It belongs to the outer membrane OOP (TC 1.B.6) superfamily. In terms of assembly, disulfide-linked heterodimer with Omp40.

The protein resides in the cell outer membrane. Its function is as follows. May have porin activity and function in peptidoglycan binding. This is Outer membrane protein 41 from Porphyromonas gingivalis (strain ATCC BAA-308 / W83).